A 355-amino-acid polypeptide reads, in one-letter code: UPF0421 protein BALH_2468 (355 aa).

The next 4 helical transmembrane spans lie at 19–39 (IAVF…IFAV), 74–94 (FTFF…FTIV), 109–129 (TLTA…AFLI), and 131–151 (LATT…ILPP).

This sequence belongs to the UPF0421 family.

The protein resides in the cell membrane. This Bacillus thuringiensis (strain Al Hakam) protein is UPF0421 protein BALH_2468.